Here is a 146-residue protein sequence, read N- to C-terminus: Endoribonuclease YbeY (146 aa).

Residues His-108, His-112, and His-118 each coordinate Zn(2+).

It belongs to the endoribonuclease YbeY family. The cofactor is Zn(2+).

The protein localises to the cytoplasm. In terms of biological role, single strand-specific metallo-endoribonuclease involved in late-stage 70S ribosome quality control and in maturation of the 3' terminus of the 16S rRNA. This Onion yellows phytoplasma (strain OY-M) protein is Endoribonuclease YbeY.